The following is a 52-amino-acid chain: UPF0057 membrane protein PA0567 (52 aa).

Transmembrane regions (helical) follow at residues 6–26 (ILIA…FGGA) and 29–49 (LNIL…VYII).

It belongs to the UPF0057 (PMP3) family.

The protein resides in the cell membrane. This is UPF0057 membrane protein PA0567 from Pseudomonas aeruginosa (strain ATCC 15692 / DSM 22644 / CIP 104116 / JCM 14847 / LMG 12228 / 1C / PRS 101 / PAO1).